Consider the following 296-residue polypeptide: Factor associated with metabolism and energy (296 aa).

Gly-2 is lipidated: N-myristoyl glycine. Basic and acidic residues-rich tracts occupy residues 173-187 and 267-281; these read SLHGEARINKQSPRD and EQGKDEKKPRALVRT. Disordered stretches follow at residues 173-204 and 256-281; these read SLHGEARINKQSPRDHKAKKTLQSTPRNDDHD and LLWDSSSSDSDEQGKDEKKPRALVRT.

Its subcellular location is the cell membrane. The protein localises to the cytoplasmic vesicle. Its function is as follows. May be involved in tuning the metabolism, energy expenditure, and excretion processes. This Homo sapiens (Human) protein is Factor associated with metabolism and energy.